The sequence spans 382 residues: Na(+)/H(+) antiporter NhaA 2 (382 aa).

11 helical membrane passes run 7 to 27 (MVLS…LALL), 58 to 78 (LDLW…GLEL), 94 to 114 (SLPI…FAAI), 124 to 144 (GWAI…MLLG), 153 to 173 (LFLL…IALF), 178 to 198 (LSAL…LLNY), 199 to 219 (YHIT…IAML), 255 to 275 (NPWV…GIDI), 291 to 311 (IILG…FIAI), 327 to 347 (FYGI…IDGL), and 361 to 381 (LAIL…LKIV).

This sequence belongs to the NhaA Na(+)/H(+) (TC 2.A.33) antiporter family.

It is found in the cell inner membrane. It carries out the reaction Na(+)(in) + 2 H(+)(out) = Na(+)(out) + 2 H(+)(in). In terms of biological role, na(+)/H(+) antiporter that extrudes sodium in exchange for external protons. This chain is Na(+)/H(+) antiporter NhaA 2, found in Campylobacter jejuni subsp. jejuni serotype O:6 (strain 81116 / NCTC 11828).